The sequence spans 519 residues: Importin subunit alpha-9 (519 aa).

The disordered stretch occupies residues 1–29; sequence MADDGSASNRRDPIKSSVGNVAGQRRRKQ. ARM repeat units follow at residues 116-156, 158-197, 200-239, 244-283, 286-326, 335-374, 377-416, and 429-468; these read FPPV…NIAA, KPEE…NVAG, EDLR…NLIK, KAAA…YLSA, DIAT…NFVA, ILIR…NIAA, IEHK…NLCV, and QEHL…LVLR.

The protein belongs to the importin alpha family. In terms of assembly, forms a complex with importin subunit beta-1.

Its subcellular location is the nucleus envelope. Binds to conventional NLS motifs and mediates nuclear protein import across the nuclear envelope. Acts as a cellular receptor for the nuclear import of the virD2 protein of Agrobacterium, but is not essential for Agrobacterium-mediated root transformation. This chain is Importin subunit alpha-9, found in Arabidopsis thaliana (Mouse-ear cress).